The chain runs to 180 residues: NADH-quinone oxidoreductase subunit I (180 aa).

4Fe-4S ferredoxin-type domains lie at 48-80 (IVLT…LQKS) and 90-119 (EFFR…LTPD). [4Fe-4S] cluster is bound by residues cysteine 60, cysteine 63, cysteine 66, cysteine 70, cysteine 99, cysteine 102, cysteine 105, and cysteine 109. A compositionally biased stretch (basic and acidic residues) spans 161-174 (KPKGDAENEAKPID). Positions 161–180 (KPKGDAENEAKPIDVKSLLP) are disordered.

It belongs to the complex I 23 kDa subunit family. NDH-1 is composed of 13 different subunits. Subunits NuoA, H, J, K, L, M, N constitute the membrane sector of the complex. Requires [4Fe-4S] cluster as cofactor.

It is found in the cell inner membrane. The enzyme catalyses a quinone + NADH + 5 H(+)(in) = a quinol + NAD(+) + 4 H(+)(out). Functionally, NDH-1 shuttles electrons from NADH, via FMN and iron-sulfur (Fe-S) centers, to quinones in the respiratory chain. The immediate electron acceptor for the enzyme in this species is believed to be ubiquinone. Couples the redox reaction to proton translocation (for every two electrons transferred, four hydrogen ions are translocated across the cytoplasmic membrane), and thus conserves the redox energy in a proton gradient. The chain is NADH-quinone oxidoreductase subunit I from Shewanella oneidensis (strain ATCC 700550 / JCM 31522 / CIP 106686 / LMG 19005 / NCIMB 14063 / MR-1).